A 146-amino-acid polypeptide reads, in one-letter code: Hemoglobin subunit beta-1 (146 aa).

Residues 2–146 (HWTAEEKSAI…VAHALAHRYH (145 aa)) form the Globin domain. Heme b is bound by residues histidine 63 and histidine 92.

Belongs to the globin family. Heterotetramer of two alpha chains and two beta chains. As to expression, red blood cells.

Its function is as follows. Involved in oxygen transport from the lung to the various peripheral tissues. The sequence is that of Hemoglobin subunit beta-1 from Drymarchon melanurus erebennus (Texas indigo snake).